The following is a 604-amino-acid chain: Crossover junction endonuclease MUS81 (604 aa).

Residues Ser268–Arg290 form a disordered region. Residues Glu322–Ser419 form the ERCC4 domain.

This sequence belongs to the XPF family. In terms of assembly, interacts with EME1. Mg(2+) serves as cofactor.

It localises to the nucleus. In terms of biological role, interacts with EME1 to form a DNA structure-specific endonuclease with substrate preference for branched DNA structures with a 5'-end at the branch nick. Typical substrates include 3'-flap structures, D-loops, replication forks and nicked Holliday junctions. May be required in mitosis for the processing of stalled or collapsed replication fork intermediates. May be required in meiosis for the repair of meiosis-specific double strand breaks subsequent to single-end invasion (SEI). This is Crossover junction endonuclease MUS81 (MUS81) from Eremothecium gossypii (strain ATCC 10895 / CBS 109.51 / FGSC 9923 / NRRL Y-1056) (Yeast).